Consider the following 390-residue polypeptide: Lipid-A-disaccharide synthase (390 aa).

Belongs to the LpxB family.

The enzyme catalyses a lipid X + a UDP-2-N,3-O-bis[(3R)-3-hydroxyacyl]-alpha-D-glucosamine = a lipid A disaccharide + UDP + H(+). It functions in the pathway bacterial outer membrane biogenesis; LPS lipid A biosynthesis. In terms of biological role, condensation of UDP-2,3-diacylglucosamine and 2,3-diacylglucosamine-1-phosphate to form lipid A disaccharide, a precursor of lipid A, a phosphorylated glycolipid that anchors the lipopolysaccharide to the outer membrane of the cell. The chain is Lipid-A-disaccharide synthase from Neisseria gonorrhoeae (strain ATCC 700825 / FA 1090).